The chain runs to 254 residues: Transcription factor CAULIFLOWER (254 aa).

The region spanning 1–61 (MGRGRVEMKR…GKLFEYSSES (61 aa)) is the MADS-box domain. Positions 90–180 (QTNWSMEYSR…TKQIKERESI (91 aa)) constitute a K-box domain. Positions 182–191 (RTHQNQSEQQ) are enriched in polar residues. Residues 182-205 (RTHQNQSEQQNRSHHVAPQPQPQL) are disordered.

In terms of assembly, homodimer capable of binding to CArG-box sequences.

It localises to the nucleus. In terms of biological role, probable transcription factor that promotes early floral meristem identity in synergy with APETALA1, FRUITFULL and LEAFY. Is required subsequently for the transition of an inflorescence meristem into a floral meristem. Seems to be partially redundant to the function of APETALA1. In Brassica rapa subsp. chinensis (Pak-choi), this protein is Transcription factor CAULIFLOWER (CAL).